We begin with the raw amino-acid sequence, 113 residues long: UPF0342 protein MGAS10750_Spy0713 (113 aa).

Belongs to the UPF0342 family.

The chain is UPF0342 protein MGAS10750_Spy0713 from Streptococcus pyogenes serotype M4 (strain MGAS10750).